A 467-amino-acid chain; its full sequence is Pancreatic lipase-related protein 3 (467 aa).

An N-terminal signal peptide occupies residues methionine 1–glycine 17. An intrachain disulfide couples cysteine 21 to cysteine 27. A glycan (N-linked (GlcNAc...) asparagine) is linked at asparagine 74. Cysteine 107 and cysteine 118 are oxidised to a cystine. The N-linked (GlcNAc...) asparagine glycan is linked to asparagine 125. Serine 168 acts as the Nucleophile in catalysis. Catalysis depends on aspartate 191, which acts as the Charge relay system. Cysteine 252 and cysteine 277 form a disulfide bridge. Histidine 279 (charge relay system) is an active-site residue. 3 disulfides stabilise this stretch: cysteine 301–cysteine 312, cysteine 315–cysteine 320, and cysteine 451–cysteine 467. Residues tryptophan 355–cysteine 467 form the PLAT domain.

Belongs to the AB hydrolase superfamily. Lipase family. As to expression, overexpressed in hepatocellular carcinoma.

It localises to the secreted. The enzyme catalyses a triacylglycerol + H2O = a diacylglycerol + a fatty acid + H(+). The sequence is that of Pancreatic lipase-related protein 3 (PNLIPRP3) from Homo sapiens (Human).